The primary structure comprises 349 residues: Two pore potassium channel b (349 aa).

Residues 1–53 (MAALDQQPLLHDGGDQKPPPEGAARRFRRCRTAPSSEPPPTDKDNSSAADAPP) form a disordered region. Residues 1–66 (MAALDQQPLL…FTGGGRPSFR (66 aa)) lie on the Cytoplasmic side of the membrane. The chain crosses the membrane as a helical span at residues 67 to 87 (LVGLLLVAYLLLGTIAFYLAM). The segment at residues 100–119 (DALYFCVVTMTTVGYGDLVP) is an intramembrane region (pore-forming). The helical transmembrane segment at 123–143 (AAKLLACAFVFAGVAVVGTFL) threads the bilayer. Over 144–180 (SKAADYLVEKQEALLFRALHSHTMVRAMEMNKVRYKL) the chain is Cytoplasmic. Residues 181–201 (YTAGLLLVAAVASGTVVLWKV) traverse the membrane as a helical segment. The segment at residues 208 to 227 (DAFYCVCATVTTLGYGDRSF) is an intramembrane region (pore-forming). Residues 234-254 (AFAVAWITVSTVVVALFFLYA) form a helical membrane-spanning segment. Residues 255–349 (AELYTERRQR…PTPDPPPSLR (95 aa)) lie on the Cytoplasmic side of the membrane. 2 consecutive EF-hand domains span residues 271-306 (LRRR…ELGK) and 310-345 (EDIS…PDPP). Ca(2+) is bound by residues Asp284, Asp286, Asp288, Arg290, Asp295, Asp323, Asp325, Ser327, Thr329, and Asp334. Residues 326 to 349 (HSGTLSPADLAAAQPTPDPPPSLR) are disordered.

Belongs to the two pore domain potassium channel (TC 1.A.1.7) family. Homodimer.

The protein resides in the vacuole membrane. Highly selective inward-rectifying potassium channel that is specifically located in the tonoplast of protein storage vacuoles. Functions independently of the voltage difference across the membrane. The sequence is that of Two pore potassium channel b (TPKB) from Oryza sativa subsp. japonica (Rice).